Here is a 303-residue protein sequence, read N- to C-terminus: Mitochondrial carrier homolog 2 (303 aa).

The residue at position 2 (A2) is an N-acetylalanine. The Mitochondrial intermembrane segment spans residues 2–15; it reads ADAASQVLLGSGLT. Solcar repeat units lie at residues 2–98 and 118–206; these read ADAA…YQES and DHVI…VNTY. The chain crosses the membrane as a helical span at residues 16–36; sequence ILSQPLMYVKVLIQVGYEPLP. Topologically, residues 37–77 are cytoplasmic; it reads PTIGRNIFGRQVCQLPGLFSYAQHIASIDGRRGLFTGLTPR. A helical membrane pass occupies residues 78-92; that stretch reads LCSGVLGTVVHGKVL. Residues 93-135 are Mitochondrial intermembrane-facing; the sequence is QHYQESDKGEELGPGNVQKEVSSSFDHVIKETTREMIARSAAT. A helical transmembrane segment spans residues 136 to 156; that stretch reads LITHPFHVITLRSMVQFIGRE. At 157–180 the chain is on the cytoplasmic side; that stretch reads SKYCGLCDSIITIYREEGILGFFA. The chain crosses the membrane as a helical span at residues 181–199; it reads GLVPRLLGDILSLWLCNSL. The Mitochondrial intermembrane portion of the chain corresponds to 200–231; that stretch reads AYLVNTYALDSGVSTMNEMKSYSQAVTGFFAS. Residues 232–252 traverse the membrane as a helical segment; the sequence is MLTYPFVLVSNLMAVNNCGLA. The Cytoplasmic portion of the chain corresponds to 253-280; sequence GGCPPYSPIYTSWIDCWCMLQKEGNMSR. The chain crosses the membrane as a helical span at residues 281–303; sequence GNSLFFRKVPFGKTYCCDLKMLI.

It belongs to the mitochondrial carrier (TC 2.A.29) family. In terms of assembly, interacts with p15BID.

The protein localises to the mitochondrion outer membrane. In terms of biological role, protein insertase that mediates insertion of transmembrane proteins into the mitochondrial outer membrane. Catalyzes insertion of proteins with alpha-helical transmembrane regions, such as signal-anchored, tail-anchored and multi-pass membrane proteins. Does not mediate insertion of beta-barrel transmembrane proteins. Also acts as a receptor for the truncated form of pro-apoptotic BH3-interacting domain death agonist (p15 BID) and has therefore a critical function in apoptosis. Regulates the quiescence/cycling of hematopoietic stem cells (HSCs). Acts as a regulator of mitochondrial fusion, essential for the naive-to-primed interconversion of embryonic stem cells (ESCs). Acts as a regulator of lipid homeostasis and has a regulatory role in adipocyte differentiation and biology. The polypeptide is Mitochondrial carrier homolog 2 (Homo sapiens (Human)).